Reading from the N-terminus, the 315-residue chain is Methionyl-tRNA formyltransferase (315 aa).

117–120 (SLLP) serves as a coordination point for (6S)-5,6,7,8-tetrahydrofolate.

The protein belongs to the Fmt family.

The enzyme catalyses L-methionyl-tRNA(fMet) + (6R)-10-formyltetrahydrofolate = N-formyl-L-methionyl-tRNA(fMet) + (6S)-5,6,7,8-tetrahydrofolate + H(+). Its function is as follows. Attaches a formyl group to the free amino group of methionyl-tRNA(fMet). The formyl group appears to play a dual role in the initiator identity of N-formylmethionyl-tRNA by promoting its recognition by IF2 and preventing the misappropriation of this tRNA by the elongation apparatus. This Methylibium petroleiphilum (strain ATCC BAA-1232 / LMG 22953 / PM1) protein is Methionyl-tRNA formyltransferase.